The chain runs to 356 residues: UDP-N-acetylglucosamine--N-acetylmuramyl-(pentapeptide) pyrophosphoryl-undecaprenol N-acetylglucosamine transferase (356 aa).

UDP-N-acetyl-alpha-D-glucosamine-binding positions include 14–16 (TGG), Asn126, Arg162, Ser190, Ile244, and Gln289.

It belongs to the glycosyltransferase 28 family. MurG subfamily.

The protein localises to the cell inner membrane. It catalyses the reaction di-trans,octa-cis-undecaprenyl diphospho-N-acetyl-alpha-D-muramoyl-L-alanyl-D-glutamyl-meso-2,6-diaminopimeloyl-D-alanyl-D-alanine + UDP-N-acetyl-alpha-D-glucosamine = di-trans,octa-cis-undecaprenyl diphospho-[N-acetyl-alpha-D-glucosaminyl-(1-&gt;4)]-N-acetyl-alpha-D-muramoyl-L-alanyl-D-glutamyl-meso-2,6-diaminopimeloyl-D-alanyl-D-alanine + UDP + H(+). Its pathway is cell wall biogenesis; peptidoglycan biosynthesis. Cell wall formation. Catalyzes the transfer of a GlcNAc subunit on undecaprenyl-pyrophosphoryl-MurNAc-pentapeptide (lipid intermediate I) to form undecaprenyl-pyrophosphoryl-MurNAc-(pentapeptide)GlcNAc (lipid intermediate II). This Cupriavidus pinatubonensis (strain JMP 134 / LMG 1197) (Cupriavidus necator (strain JMP 134)) protein is UDP-N-acetylglucosamine--N-acetylmuramyl-(pentapeptide) pyrophosphoryl-undecaprenol N-acetylglucosamine transferase.